Reading from the N-terminus, the 493-residue chain is Growth-regulating factor 8 (493 aa).

One can recognise a QLQ domain in the interval 149-184 (AFSEAQWHELERQRNIYKYMMASVPVPPELLTPFPK). The region spanning 243 to 287 (DLEPWRCKRTDGKKWRCSRNVIPDQKYCERHTHKSRPRSRKHVES) is the WRC domain. 2 consecutive short sequence motifs (bipartite nuclear localization signal) follow at residues 248–258 (RCKRTDGKKWR) and 276–283 (KSRPRSRK). A disordered region spans residues 270–302 (CERHTHKSRPRSRKHVESSHQSSHHNDIRTAKN). A compositionally biased stretch (basic residues) spans 273 to 283 (HTHKSRPRSRK).

This sequence belongs to the GRF family. As to expression, predominantly expressed in shoot tips and flowers.

The protein resides in the nucleus. In terms of biological role, transcription activator that plays a role in the regulation of cell expansion in leaf and cotyledons tissues. Component of a network formed by miR396, the GRFs and their interacting factors (GIFs) acting in the regulation of meristem function, at least partially through the control of cell proliferation. The protein is Growth-regulating factor 8 (GRF8) of Arabidopsis thaliana (Mouse-ear cress).